The following is a 1411-amino-acid chain: Regulating synaptic membrane exocytosis protein 2 (1411 aa).

The tract at residues 1 to 33 (MSAPVGPRGRLAPIPAASQPPLQPEMPDLSHLT) is disordered. A RabBD domain is found at 26 to 185 (MPDLSHLTEE…TKSGAWFYNS (160 aa)). The FYVE-type zinc finger occupies 117–173 (KGDAPTCGICHKTKFADGCGHNCSYCQTKFCARCGGRVSLRSNKVMWVCNLCRKQQE). The Zn(2+) site is built by Cys-123, Cys-126, Cys-139, Cys-142, Cys-147, Cys-150, Cys-165, and Cys-168. Composition is skewed to basic and acidic residues over residues 203-216 (NEEA…KLHE), 273-287 (DQNR…REEY), 318-329 (DSDHLSYRDSNR), 348-366 (RDEY…RYRS), 382-401 (EQMR…RHSD), and 410-434 (EDSR…RRAA). Disordered regions lie at residues 203–598 (NEEA…SERQ) and 623–650 (SGVD…WQPS). Position 400 is a phosphoserine (Ser-400). Positions 451 to 463 (GPSSYAQRTTNHS) are enriched in polar residues. Basic and acidic residues predominate over residues 475–492 (DRPDLRRTDSLRKQHHLD). The segment covering 510–521 (RNDSLSSDQSES) has biased composition (polar residues). A compositionally biased stretch (basic residues) spans 528 to 537 (KPHKSKKGGK). Positions 558 to 568 (SCDDVEIESES) are enriched in acidic residues. 2 stretches are compositionally biased toward basic and acidic residues: residues 569-583 (VSEK…RKTS) and 634-644 (NEEHSHSDKHP). The region spanning 668–754 (DGSVPRDSGA…EPQVELVVSR (87 aa)) is the PDZ domain. Thr-689 bears the Phosphothreonine mark. Residues 762-793 (IPDSTHAQLESSSSSFESQKMDRPSISVTSPM) form a disordered region. Residues Ser-791 and Ser-794 each carry the phosphoserine modification. The 124-residue stretch at 805–928 (LSGQLSIKLW…ALLDDEPHWY (124 aa)) folds into the C2 1 domain. Disordered regions lie at residues 939–973 (PLPH…SEVS) and 993–1190 (DLQS…STET). 2 stretches are compositionally biased toward polar residues: residues 994 to 1015 (LQSS…SPSG) and 1049 to 1059 (RTMTGHYNTIS). Residues 1060-1113 (RMDRHRVMDDHYSPDRDRDCEAADRQPYHRSRSTEQRPLLERTTTRSRSTERPD) are compositionally biased toward basic and acidic residues. Over residues 1143-1153 (GSVQTSPSSTP) the composition is skewed to polar residues. Residue Ser-1148 is modified to Phosphoserine. The C2 2 domain occupies 1257–1375 (AMGDIQVGMM…ELSNMVIGWF (119 aa)). Phosphoserine is present on residues Ser-1396 and Ser-1399.

As to quaternary structure, interacts with RAB3A and RAB3B that have been activated by GTP-binding. Interacts with RAB3C, RAB3D and RAB26. Interacts with TSPOAP1 and RIMBP2. Interacts with PPFIA3 and PPFIA4. Interacts via its zinc finger with the first C2 domain of UNC13A. Forms a complex consisting of UNC13A, RIMS2 and RAB3A. Heterodimer with PCLO. Part of a ternary complex involving PCLO and EPAC2. Widely expressed. Expressed in melanocytes. In fetal tissues, predominantly expressed in the brain. In the retina, expressed in the outer plexiform layer (at protein level). In the cerebellum, expressed in Purkinje cells (at protein level). In the pancreas, expressed in Langerhans islets (at protein level).

The protein localises to the cell membrane. It localises to the synapse. Its subcellular location is the presynaptic cell membrane. Its function is as follows. Rab effector involved in exocytosis. May act as scaffold protein. Plays a role in dendrite formation by melanocytes. The protein is Regulating synaptic membrane exocytosis protein 2 (RIMS2) of Homo sapiens (Human).